A 475-amino-acid chain; its full sequence is ATP synthase subunit beta (475 aa).

Residue 153-160 (GGAGVGKT) participates in ATP binding.

It belongs to the ATPase alpha/beta chains family. In terms of assembly, F-type ATPases have 2 components, CF(1) - the catalytic core - and CF(0) - the membrane proton channel. CF(1) has five subunits: alpha(3), beta(3), gamma(1), delta(1), epsilon(1). CF(0) has three main subunits: a(1), b(2) and c(9-12). The alpha and beta chains form an alternating ring which encloses part of the gamma chain. CF(1) is attached to CF(0) by a central stalk formed by the gamma and epsilon chains, while a peripheral stalk is formed by the delta and b chains.

The protein localises to the cell membrane. It catalyses the reaction ATP + H2O + 4 H(+)(in) = ADP + phosphate + 5 H(+)(out). Produces ATP from ADP in the presence of a proton gradient across the membrane. The catalytic sites are hosted primarily by the beta subunits. This Limosilactobacillus reuteri (strain DSM 20016) (Lactobacillus reuteri) protein is ATP synthase subunit beta.